The sequence spans 690 residues: DNA-directed RNA polymerase subunit beta' (690 aa).

Zn(2+)-binding residues include Cys76, Cys78, Cys94, and Cys97. Mg(2+) contacts are provided by Asp496, Asp498, and Asp500.

This sequence belongs to the RNA polymerase beta' chain family. RpoC1 subfamily. In plastids the minimal PEP RNA polymerase catalytic core is composed of four subunits: alpha, beta, beta', and beta''. When a (nuclear-encoded) sigma factor is associated with the core the holoenzyme is formed, which can initiate transcription. The cofactor is Mg(2+). Zn(2+) is required as a cofactor.

The protein resides in the plastid. The protein localises to the chloroplast. The enzyme catalyses RNA(n) + a ribonucleoside 5'-triphosphate = RNA(n+1) + diphosphate. In terms of biological role, DNA-dependent RNA polymerase catalyzes the transcription of DNA into RNA using the four ribonucleoside triphosphates as substrates. This is DNA-directed RNA polymerase subunit beta' from Lemna minor (Common duckweed).